The sequence spans 38 residues: Spheniscin-2 (38 aa).

Cystine bridges form between Cys5/Cys33, Cys12/Cys27, and Cys17/Cys34.

Monomer. Secreted into the stomach cavity.

It localises to the secreted. Has antifungal activity and antibacterial activity against Gram-positive and Gram-negative bacteria. Involved in the process of food preservation in the stomach during the incubation fast. May also be present during infection. This chain is Spheniscin-2, found in Aptenodytes patagonicus (King penguin).